The primary structure comprises 93 residues: Small ribosomal subunit protein uS19 (93 aa).

This sequence belongs to the universal ribosomal protein uS19 family.

Functionally, protein S19 forms a complex with S13 that binds strongly to the 16S ribosomal RNA. The chain is Small ribosomal subunit protein uS19 from Thermoanaerobacter pseudethanolicus (strain ATCC 33223 / 39E) (Clostridium thermohydrosulfuricum).